A 526-amino-acid chain; its full sequence is Peptide chain release factor 3 (526 aa).

In terms of domain architecture, tr-type G spans 9-277 (DKRRTFAIIS…GIVEWAPKPQ (269 aa)). Residues 18 to 25 (SHPDAGKT), 86 to 90 (DTPGH), and 140 to 143 (NKLD) each bind GTP.

Belongs to the TRAFAC class translation factor GTPase superfamily. Classic translation factor GTPase family. PrfC subfamily.

The protein resides in the cytoplasm. Its function is as follows. Increases the formation of ribosomal termination complexes and stimulates activities of RF-1 and RF-2. It binds guanine nucleotides and has strong preference for UGA stop codons. It may interact directly with the ribosome. The stimulation of RF-1 and RF-2 is significantly reduced by GTP and GDP, but not by GMP. The protein is Peptide chain release factor 3 of Shewanella sediminis (strain HAW-EB3).